The following is a 283-amino-acid chain: Pantothenate synthetase (283 aa).

31-38 (MGALHEGH) lines the ATP pocket. Histidine 38 (proton donor) is an active-site residue. Residue glutamine 62 participates in (R)-pantoate binding. Glutamine 62 lines the beta-alanine pocket. An ATP-binding site is contributed by 148-151 (GKKD). Glutamine 154 serves as a coordination point for (R)-pantoate. Residues valine 177 and 185–188 (RSSR) contribute to the ATP site.

Belongs to the pantothenate synthetase family. Homodimer.

It localises to the cytoplasm. It catalyses the reaction (R)-pantoate + beta-alanine + ATP = (R)-pantothenate + AMP + diphosphate + H(+). Its pathway is cofactor biosynthesis; (R)-pantothenate biosynthesis; (R)-pantothenate from (R)-pantoate and beta-alanine: step 1/1. Catalyzes the condensation of pantoate with beta-alanine in an ATP-dependent reaction via a pantoyl-adenylate intermediate. This Staphylococcus haemolyticus (strain JCSC1435) protein is Pantothenate synthetase.